The sequence spans 320 residues: MVRKKIALIGSGMIGGTLAHIIGLKELGDVVLFDISEGMPQGKALDIAESSPIDGFDVHLKGANAYEAIEGADVVIVTAGVARKPGMSRDDLLGINLKVMEQVGAGIKKYAPSAFVICITNPLDAMVWALQKFSGLPVHKVVGMAGILDSARFRYFLSEEFKVSVKDVTAFVLGGHGDSMVPLVRYSTVGGISLPDLVKMGWTTQERIDQIIQRTRDGGAEVISLLKTGSAYYAPAASAVSMAEAYLKGTKRVVPVAAYLSGEYGVNDTYVGVPVVLGSGGVERVIEIDLDKEERDAFDYSVNAVKKLCEACIALVPSLK.

NAD(+)-binding positions include G10–G15 and D34. The substrate site is built by R83 and R89. NAD(+) is bound by residues N96 and I119 to N121. Substrate is bound by residues N121 and R152. H176 functions as the Proton acceptor in the catalytic mechanism.

This sequence belongs to the LDH/MDH superfamily. MDH type 3 family.

The enzyme catalyses (S)-malate + NAD(+) = oxaloacetate + NADH + H(+). In terms of biological role, catalyzes the reversible oxidation of malate to oxaloacetate. The protein is Malate dehydrogenase of Bartonella tribocorum (strain CIP 105476 / IBS 506).